We begin with the raw amino-acid sequence, 221 residues long: Histone H1-like protein HC2 (221 aa).

2 stretches are compositionally biased toward basic residues: residues 1 to 50 (MLGV…KTVA) and 59 to 70 (PVAKKATAKKAP). The disordered stretch occupies residues 1–70 (MLGVQKKRST…AKKATAKKAP (70 aa)).

This sequence belongs to the histone H1/H5 family. HCT subfamily.

Might have a role in establishing the nucleoid structure of elementary bodies. The sequence is that of Histone H1-like protein HC2 (hctB) from Chlamydia trachomatis serovar L2 (strain ATCC VR-902B / DSM 19102 / 434/Bu).